Reading from the N-terminus, the 54-residue chain is Beta-2-microglobulin (54 aa).

The region spanning 3-41 (KVELSDLSFNKDWSFYLLAHREFVPTATDKYACRVSHIT) is the Ig-like C1-type domain.

It belongs to the beta-2-microglobulin family. In terms of assembly, heterodimer of an alpha chain and a beta chain. Beta-2-microglobulin is the beta-chain of major histocompatibility complex class I molecules.

Its subcellular location is the secreted. In terms of biological role, component of the class I major histocompatibility complex (MHC). Involved in the presentation of peptide antigens to the immune system. This is Beta-2-microglobulin (B2M) from Mesocricetus auratus (Golden hamster).